The following is a 225-amino-acid chain: Orotate phosphoribosyltransferase (225 aa).

Lysine 31 is a 5-phospho-alpha-D-ribose 1-diphosphate binding site. 39–40 contacts orotate; sequence FF. 5-phospho-alpha-D-ribose 1-diphosphate-binding positions include 78–79, arginine 105, lysine 106, lysine 109, histidine 111, and 130–138; these read YK and DDVLTSGKA. Positions 134 and 163 each coordinate orotate.

The protein belongs to the purine/pyrimidine phosphoribosyltransferase family. PyrE subfamily. Homodimer.

The enzyme catalyses orotidine 5'-phosphate + diphosphate = orotate + 5-phospho-alpha-D-ribose 1-diphosphate. It functions in the pathway pyrimidine metabolism; UMP biosynthesis via de novo pathway; UMP from orotate: step 1/2. In terms of biological role, catalyzes the transfer of a ribosyl phosphate group from 5-phosphoribose 1-diphosphate to orotate, leading to the formation of orotidine monophosphate (OMP). The chain is Orotate phosphoribosyltransferase (URA5) from Cryptococcus neoformans var. neoformans serotype D (strain B-3501A) (Filobasidiella neoformans).